The primary structure comprises 27 residues: Defensin-like protein 1 (27 aa).

Q1 carries the post-translational modification Pyrrolidone carboxylic acid.

Belongs to the DEFL family. Forms oligomers in its native state.

Functionally, possesses antifungal activity sensitive to inorganic cations. The polypeptide is Defensin-like protein 1 (Brassica campestris (Field mustard)).